The sequence spans 722 residues: Zinc finger BED domain-containing protein RICESLEEPER 2 (722 aa).

Residues 66 to 134 (RKKSLVWEHF…QEHKLALTPA (69 aa)) form a BED-type zinc finger. Zn(2+) is bound by residues C89, C92, H113, and H127. The tract at residues 572-592 (VEQGDGNNAPASENGTQATAP) is disordered. Residues 576–592 (DGNNAPASENGTQATAP) are compositionally biased toward polar residues. The tract at residues 617 to 702 (ELEQYLDESL…EALVCAKDWL (86 aa)) is HATC (Hobo-Ac-Tam3) domain.

As to quaternary structure, homodimer.

It localises to the nucleus. Transposase-like protein that is essential for plant growth and development. May regulate global gene expression by recruiting other cellular factors. This is Zinc finger BED domain-containing protein RICESLEEPER 2 from Oryza sativa subsp. japonica (Rice).